A 372-amino-acid chain; its full sequence is N-methyl-L-tryptophan oxidase (372 aa).

4-34 (DLIIIGSGSVGAAAGYYATRAGLKVLMTDAH) is an FAD binding site. Cys-307 carries the post-translational modification S-8alpha-FAD cysteine.

The protein belongs to the MSOX/MTOX family. MTOX subfamily. In terms of assembly, monomer. It depends on FAD as a cofactor.

It catalyses the reaction N(alpha)-methyl-L-tryptophan + O2 + H2O = L-tryptophan + formaldehyde + H2O2. Catalyzes the oxidative demethylation of N-methyl-L-tryptophan. This is N-methyl-L-tryptophan oxidase from Salmonella heidelberg (strain SL476).